Consider the following 290-residue polypeptide: 4-hydroxybenzoate octaprenyltransferase (290 aa).

A run of 8 helical transmembrane segments spans residues 40–60 (IAGA…GVVI), 99–119 (LALF…LNEL), 120–140 (TFWL…TKRF), 142–162 (FMPQ…AFAA), 165–185 (GEVP…TVAY), 215–235 (LMIA…GHRL), 239–259 (WPWY…HSLI), and 267–287 (SFHA…GLYF).

Belongs to the UbiA prenyltransferase family. Requires Mg(2+) as cofactor.

It localises to the cell inner membrane. The catalysed reaction is all-trans-octaprenyl diphosphate + 4-hydroxybenzoate = 4-hydroxy-3-(all-trans-octaprenyl)benzoate + diphosphate. It participates in cofactor biosynthesis; ubiquinone biosynthesis. Its function is as follows. Catalyzes the prenylation of para-hydroxybenzoate (PHB) with an all-trans polyprenyl group. Mediates the second step in the final reaction sequence of ubiquinone-8 (UQ-8) biosynthesis, which is the condensation of the polyisoprenoid side chain with PHB, generating the first membrane-bound Q intermediate 3-octaprenyl-4-hydroxybenzoate. The polypeptide is 4-hydroxybenzoate octaprenyltransferase (Alcanivorax borkumensis (strain ATCC 700651 / DSM 11573 / NCIMB 13689 / SK2)).